The sequence spans 689 residues: Glycine--tRNA ligase beta subunit (689 aa).

Belongs to the class-II aminoacyl-tRNA synthetase family. In terms of assembly, tetramer of two alpha and two beta subunits.

It localises to the cytoplasm. The enzyme catalyses tRNA(Gly) + glycine + ATP = glycyl-tRNA(Gly) + AMP + diphosphate. In Salmonella choleraesuis (strain SC-B67), this protein is Glycine--tRNA ligase beta subunit.